The primary structure comprises 432 residues: Trigger factor (432 aa).

One can recognise a PPIase FKBP-type domain in the interval 161-246; it reads GKRVSIDFVG…VNKVEARQLP (86 aa).

It belongs to the FKBP-type PPIase family. Tig subfamily.

The protein localises to the cytoplasm. The enzyme catalyses [protein]-peptidylproline (omega=180) = [protein]-peptidylproline (omega=0). Its function is as follows. Involved in protein export. Acts as a chaperone by maintaining the newly synthesized protein in an open conformation. Functions as a peptidyl-prolyl cis-trans isomerase. In Vibrio vulnificus (strain YJ016), this protein is Trigger factor.